Here is a 397-residue protein sequence, read N- to C-terminus: Tryptophan synthase beta chain (397 aa).

N6-(pyridoxal phosphate)lysine is present on Lys-87.

It belongs to the TrpB family. Tetramer of two alpha and two beta chains. Pyridoxal 5'-phosphate serves as cofactor.

The enzyme catalyses (1S,2R)-1-C-(indol-3-yl)glycerol 3-phosphate + L-serine = D-glyceraldehyde 3-phosphate + L-tryptophan + H2O. It functions in the pathway amino-acid biosynthesis; L-tryptophan biosynthesis; L-tryptophan from chorismate: step 5/5. Its function is as follows. The beta subunit is responsible for the synthesis of L-tryptophan from indole and L-serine. The polypeptide is Tryptophan synthase beta chain (Escherichia coli O127:H6 (strain E2348/69 / EPEC)).